The following is a 350-amino-acid chain: Ferrochelatase (350 aa).

Fe cation-binding residues include His-220 and Glu-301.

Belongs to the ferrochelatase family.

Its subcellular location is the cytoplasm. It carries out the reaction heme b + 2 H(+) = protoporphyrin IX + Fe(2+). It participates in porphyrin-containing compound metabolism; protoheme biosynthesis; protoheme from protoporphyrin-IX: step 1/1. Its function is as follows. Catalyzes the ferrous insertion into protoporphyrin IX. The polypeptide is Ferrochelatase (Brucella anthropi (strain ATCC 49188 / DSM 6882 / CCUG 24695 / JCM 21032 / LMG 3331 / NBRC 15819 / NCTC 12168 / Alc 37) (Ochrobactrum anthropi)).